We begin with the raw amino-acid sequence, 109 residues long: U4-lycotoxin-Ls1d (109 aa).

The N-terminal stretch at 1–22 (MKVLVLFSVLFLTLFSYSSTEA) is a signal peptide. Positions 23 to 44 (MDEFDSDAEEDMLSLMANEQVR) are excised as a propeptide. The segment at 45 to 88 (AKACTPRLHDCSHDRHSCCRGELFKDVCYCFYPEGEDKTEVCSC) is knottin domain. Disulfide bonds link C48–C63, C55–C72, C62–C88, and C74–C86. A linear cationic cytotoxin domain region spans residues 89 to 108 (QQPKSHKYIEKVVDKARTVV).

Belongs to the neurotoxin 19 (CSTX) family. 05 (U4-Lctx) subfamily. As to expression, expressed by the venom gland.

Its subcellular location is the secreted. Enhances the high-affinity desensitization of human P2RX3 purinoceptors. This is U4-lycotoxin-Ls1d from Lycosa singoriensis (Wolf spider).